Consider the following 184-residue polypeptide: Dirigent protein 14 (184 aa).

Positions methionine 1 to serine 20 are cleaved as a signal peptide. The cysteines at positions 36 and 182 are disulfide-linked. Asparagine 55 and asparagine 119 each carry an N-linked (GlcNAc...) asparagine glycan.

The protein belongs to the plant dirigent protein family. As to quaternary structure, homodimer.

The protein localises to the secreted. Its subcellular location is the extracellular space. It localises to the apoplast. Its function is as follows. Dirigent proteins impart stereoselectivity on the phenoxy radical-coupling reaction, yielding optically active lignans from two molecules of coniferyl alcohol in the biosynthesis of lignans, flavonolignans, and alkaloids and thus plays a central role in plant secondary metabolism. The polypeptide is Dirigent protein 14 (DIR14) (Arabidopsis thaliana (Mouse-ear cress)).